The chain runs to 316 residues: Dehydrogenase/reductase SDR family protein 7-like (316 aa).

The Cytoplasmic segment spans residues 1-18; it reads MFFYKIIYFIGFPYIVLR. A helical; Signal-anchor for type II membrane protein transmembrane segment spans residues 19-39; sequence LIVSIILPIASLYFIYCNFIA. Over 40–316 the chain is Peroxisomal; it reads PKLREKPESS…HKFASSSVKK (277 aa). 56 to 80 contributes to the NAD(+) binding site; sequence IITGASSGIGAELAKKYARLGCKVT. Residue Ser-194 participates in substrate binding. Tyr-207 serves as the catalytic Proton acceptor.

The protein belongs to the short-chain dehydrogenases/reductases (SDR) family.

Its subcellular location is the peroxisome membrane. Putative oxidoreductase. This is Dehydrogenase/reductase SDR family protein 7-like from Dictyostelium discoideum (Social amoeba).